The chain runs to 141 residues: Translation initiation factor 2 subunit beta (141 aa).

This sequence belongs to the eIF-2-beta/eIF-5 family. Heterotrimer composed of an alpha, a beta and a gamma chain.

EIF-2 functions in the early steps of protein synthesis by forming a ternary complex with GTP and initiator tRNA. The protein is Translation initiation factor 2 subunit beta of Thermofilum pendens (strain DSM 2475 / Hrk 5).